Consider the following 883-residue polypeptide: 3-hydroxy-3-methylglutaryl-coenzyme A reductase (883 aa).

The Cytoplasmic portion of the chain corresponds to 1-9; sequence MLSRLFRMH. The helical transmembrane segment at 10-39 threads the bilayer; the sequence is GQFVASHPWEVIVGTVTLTICMMSMNMFTG. At 40-56 the chain is on the lumenal side; sequence NDKICGWNYACPKFEED. Residues 57 to 78 form a helical membrane-spanning segment; it reads VLSSDIIILTITRCIAILYIYF. The Cytoplasmic segment spans residues 79 to 89; the sequence is QFQNLRQLGSK. The helical transmembrane segment at 90 to 114 threads the bilayer; the sequence is YILGIAGLFTIFSSFVFSTVVIHFL. Residues 115–123 are Lumenal-facing; it reads DKELTGLNE. Residues 124 to 149 traverse the membrane as a helical segment; it reads ALPFFLLLIDLSKASALAKFALSSNS. At 150-159 the chain is on the cytoplasmic side; it reads QDEVRDNIAR. The helical transmembrane segment at 160–187 threads the bilayer; the sequence is GMAILGPTFTLEALVECLVIGVGTMSGV. Topologically, residues 188–191 are lumenal; the sequence is RQLE. The helical transmembrane segment at 192–220 threads the bilayer; that stretch reads IMCCFGCMSVLANYFAFMTFFPACVSLVL. Residues 221 to 249 lie on the Cytoplasmic side of the membrane; it reads ELSRESREGRPIWQLSQFASVLEEEEDNK. A helical membrane pass occupies residues 250–276; the sequence is PNPVTQRVKMIMSLGLVLVHAHSRWIS. At 277–316 the chain is on the lumenal side; that stretch reads EPSSQNSTSISDHEVTTMLDDMMPKRVEPSMPLWQFYLSR. An N-linked (GlcNAc...) asparagine glycan is attached at Asn-282. A helical transmembrane segment spans residues 317-341; that stretch reads MVTMDVEQIITLGLALLLAVKYIFF. Topologically, residues 342 to 883 are cytoplasmic; that stretch reads EQTETESTFS…LPGTCTKKAA (542 aa). Residues 373–396 form a disordered region; sequence REPEQEKTVHVSTTEEASSKEETE. Residues Glu-554, Lys-686, and Asp-762 each act as charge relay system in the active site. The active-site Proton donor is the His-861.

It belongs to the HMG-CoA reductase family. Homotetramer. Homodimer.

It is found in the endoplasmic reticulum membrane. The protein resides in the peroxisome membrane. The catalysed reaction is (R)-mevalonate + 2 NADP(+) + CoA = (3S)-3-hydroxy-3-methylglutaryl-CoA + 2 NADPH + 2 H(+). It participates in metabolic intermediate biosynthesis; (R)-mevalonate biosynthesis; (R)-mevalonate from acetyl-CoA: step 3/3. In terms of biological role, catalyzes the conversion of (3S)-hydroxy-3-methylglutaryl-CoA (HMG-CoA) to mevalonic acid, the rate-limiting step in the synthesis of cholesterol and other isoprenoids, thus plays a critical role in cellular cholesterol homeostasis. The polypeptide is 3-hydroxy-3-methylglutaryl-coenzyme A reductase (hmgcr) (Xenopus laevis (African clawed frog)).